A 478-amino-acid chain; its full sequence is Septin-4 (478 aa).

Positions V38 to Y115 are disordered. A compositionally biased stretch (low complexity) spans A95 to P108. Phosphoserine is present on residues S117 and S118. The Septin-type G domain occupies K141 to S414. The tract at residues G151–S158 is G1 motif. Residues G151–S158 and T185 each bind GTP. The segment at D208–G211 is G3 motif. The tract at residues A289–D292 is G4 motif. K290 to E298 contacts GTP. The residue at position 325 (S325) is a Phosphoserine. GTP-binding residues include G348 and R363. A disordered region spans residues R425–E448. S432 carries the post-translational modification Phosphoserine. A Phosphothreonine modification is found at T434. Positions D446 to Y478 form a coiled coil.

It belongs to the TRAFAC class TrmE-Era-EngA-EngB-Septin-like GTPase superfamily. Septin GTPase family. In terms of assembly, septins polymerize into heterooligomeric protein complexes that form filaments, and can associate with cellular membranes, actin filaments and microtubules. GTPase activity is required for filament formation. Interacts with SEPTIN8. Component of a septin core octameric complex consisting of SEPTIN12, SEPTIN7, SEPTIN6 and SEPTIN2 or SEPTIN4 in the order 12-7-6-2-2-6-7-12 or 12-7-6-4-4-6-7-12. Interacts with SEPTIN14 (via C-terminus). Interacts with DYRK1A. Interacts with SLC6A3/DAT and SNCA/alpha-synuclein. Interacts with STX1A; in the striatum. Interacts with XIAP (via BIR3 domain) following the induction of apoptosis. Interacts with AREL1 (via HECT domain); in the cytoplasm following induction of apoptosis. Ubiquitinated by AREL1. In terms of processing, phosphorylated by DYRK1A.

Its subcellular location is the cytoplasm. It is found in the cell projection. The protein localises to the cilium. It localises to the flagellum. The protein resides in the cytoplasmic vesicle. Its subcellular location is the secretory vesicle. It is found in the axon. The protein localises to the dendrite. It localises to the perikaryon. The protein resides in the synapse. In terms of biological role, filament-forming cytoskeletal GTPase. Pro-apoptotic protein involved in LGR5-positive intestinal stem cell and Paneth cell expansion in the intestines, via its interaction with XIAP. May also play a role in the regulation of cell fate in the intestine. Positive regulator of apoptosis involved in hematopoietic stem cell homeostasis; via its interaction with XIAP. Negative regulator of repair and hair follicle regeneration in response to injury, due to inhibition of hair follicle stem cell proliferation, potentially via its interaction with XIAP. Plays an important role in male fertility and sperm motility. During spermiogenesis, essential for the establishment of the annulus (a fibrous ring structure connecting the midpiece and the principal piece of the sperm flagellum) which is a requisite for the structural and mechanical integrity of the sperm. Involved in the migration of cortical neurons and the formation of neuron leading processes during embryonic development. Required for dopaminergic metabolism in presynaptic autoreceptors; potentially via activity as a presynaptic scaffold protein. This Pongo abelii (Sumatran orangutan) protein is Septin-4.